The chain runs to 333 residues: D-fructose 1,6-bisphosphatase class 2/sedoheptulose 1,7-bisphosphatase (333 aa).

Mn(2+) is bound by residues aspartate 33, glutamate 57, aspartate 85, and glutamate 88. Residues 88-90 (EGT), tyrosine 119, 164-166 (RAR), and 186-188 (DGD) contribute to the substrate site. Glutamate 213 is a binding site for Mn(2+).

The protein belongs to the FBPase class 2 family. Homotetramer. Requires Mn(2+) as cofactor.

It carries out the reaction beta-D-fructose 1,6-bisphosphate + H2O = beta-D-fructose 6-phosphate + phosphate. The catalysed reaction is D-sedoheptulose 1,7-bisphosphate + H2O = D-sedoheptulose 7-phosphate + phosphate. Its pathway is carbohydrate biosynthesis; Calvin cycle. Its function is as follows. Catalyzes the hydrolysis of fructose 1,6-bisphosphate (Fru 1,6-P2) and sedoheptulose 1,7-bisphosphate (Sed 1,7-P2) to fructose 6-phosphate and sedoheptulose 7-phosphate, respectively. This chain is D-fructose 1,6-bisphosphatase class 2/sedoheptulose 1,7-bisphosphatase, found in Prochlorococcus marinus subsp. pastoris (strain CCMP1986 / NIES-2087 / MED4).